The following is a 296-amino-acid chain: Cytidine deaminase (296 aa).

CMP/dCMP-type deaminase domains are found at residues 47–167 and 186–296; these read EESE…FGPS and DSSD…IDPA. Residue 88 to 90 participates in substrate binding; that stretch reads NLE. Residue histidine 101 coordinates Zn(2+). Glutamate 103 functions as the Proton donor in the catalytic mechanism. Positions 128 and 131 each coordinate Zn(2+).

This sequence belongs to the cytidine and deoxycytidylate deaminase family. As to quaternary structure, homodimer. Zn(2+) is required as a cofactor.

It carries out the reaction cytidine + H2O + H(+) = uridine + NH4(+). It catalyses the reaction 2'-deoxycytidine + H2O + H(+) = 2'-deoxyuridine + NH4(+). Functionally, this enzyme scavenges exogenous and endogenous cytidine and 2'-deoxycytidine for UMP synthesis. In Shewanella woodyi (strain ATCC 51908 / MS32), this protein is Cytidine deaminase.